A 309-amino-acid chain; its full sequence is Taste receptor type 2 member 31 (309 aa).

Residues 1–2 (MT) lie on the Extracellular side of the membrane. A helical transmembrane segment spans residues 3 to 23 (TFLPIIFSSLVVVIFVIGNFA). The Cytoplasmic portion of the chain corresponds to 24 to 55 (NGFIALVNSIEWFKXQKISFADQILTALAVSR). Residues 56-76 (VGLLWVLLLNWYSTVLNPAFY) traverse the membrane as a helical segment. Over 77 to 100 (SVEVRTTAYNVWAVTGHFSNWLAT) the chain is Extracellular. The chain crosses the membrane as a helical span at residues 101 to 121 (SLSIFYLLKIANFSNFIFLHL). The Cytoplasmic portion of the chain corresponds to 122-126 (KRRVK). The helical transmembrane segment at 127–147 (SVILVMLLGPLLFLACQLFMI) threads the bilayer. The Extracellular portion of the chain corresponds to 148 to 181 (NMKEIVRTKEYEGNMTWKIKLRSAVYLSDATVTT). Asn161 carries an N-linked (GlcNAc...) asparagine glycan. A helical transmembrane segment spans residues 182–202 (LGNLVPFTLTLLCFLLLICSL). At 203–229 (CKHLKKMQLHGKGSQDPSTKVHIKVLQ) the chain is on the cytoplasmic side. The helical transmembrane segment at 230 to 250 (TVISFLLLCAIYFLSIMISVW) threads the bilayer. The Extracellular portion of the chain corresponds to 251–259 (SFGSLKNKP). Residues 260–280 (VFMFCKAIRFSYPSIHPFILI) traverse the membrane as a helical segment. Topologically, residues 281-309 (WGNKKLKQTFLSVLRQVRYWVKGEKPSSP) are cytoplasmic.

Belongs to the G-protein coupled receptor T2R family.

It is found in the membrane. Functionally, receptor that may play a role in the perception of bitterness and is gustducin-linked. May play a role in sensing the chemical composition of the gastrointestinal content. The activity of this receptor may stimulate alpha gustducin, mediate PLC-beta-2 activation and lead to the gating of TRPM5. The chain is Taste receptor type 2 member 31 (TAS2R31) from Pan paniscus (Pygmy chimpanzee).